Consider the following 148-residue polypeptide: PSPSRRSRSRSRSRSKSPKRSPAKKARKTPKKRRATGGAKKPSTLSMIVAAIQAMKNRKGSSVQAIRKYILANNKGINTSRLGSAMKLAFAKGLKSGVLVRPKTSAGASGATGSFRVGKAPSSPKKKAKKAKSPKKKSSKKSSNKSNN.

A compositionally biased stretch (basic residues) spans 1-35; that stretch reads PSPSRRSRSRSRSRSKSPKRSPAKKARKTPKKRRA. Disordered stretches follow at residues 1 to 44 and 97 to 148; these read PSPS…KPST and GVLV…KSNN. The H15 domain occupies 40–119; that stretch reads KKPSTLSMIV…GATGSFRVGK (80 aa). The segment covering 124-148 has biased composition (basic residues); that stretch reads PKKKAKKAKSPKKKSSKKSSNKSNN.

Belongs to the histone H1/H5 family. In terms of tissue distribution, sperm.

It localises to the nucleus. Its subcellular location is the chromosome. Linker histones are implicated in chromatin remodeling and/or transcriptional regulation during spermiogenesis, the process of spermatid maturation into spermatozoa. This chain is Sperm-specific protein PHI-2B, found in Mytilus californianus (California mussel).